The primary structure comprises 593 residues: Aspartate--tRNA ligase (593 aa).

Residue E180 coordinates L-aspartate. An aspartate region spans residues 204-207; the sequence is QIFK. R226 is an L-aspartate binding site. ATP is bound by residues 226–228 and Q235; that span reads RDE. Residue H453 participates in L-aspartate binding. E487 is a binding site for ATP. Residue R494 coordinates L-aspartate. An ATP-binding site is contributed by 539–542; sequence GLDR.

Belongs to the class-II aminoacyl-tRNA synthetase family. Type 1 subfamily. As to quaternary structure, homodimer.

The protein resides in the cytoplasm. It carries out the reaction tRNA(Asp) + L-aspartate + ATP = L-aspartyl-tRNA(Asp) + AMP + diphosphate. Functionally, catalyzes the attachment of L-aspartate to tRNA(Asp) in a two-step reaction: L-aspartate is first activated by ATP to form Asp-AMP and then transferred to the acceptor end of tRNA(Asp). The protein is Aspartate--tRNA ligase of Clostridium botulinum (strain Loch Maree / Type A3).